Here is a 305-residue protein sequence, read N- to C-terminus: Methionyl-tRNA formyltransferase (305 aa).

111–114 serves as a coordination point for (6S)-5,6,7,8-tetrahydrofolate; the sequence is SLLP.

The protein belongs to the Fmt family.

It carries out the reaction L-methionyl-tRNA(fMet) + (6R)-10-formyltetrahydrofolate = N-formyl-L-methionyl-tRNA(fMet) + (6S)-5,6,7,8-tetrahydrofolate + H(+). In terms of biological role, attaches a formyl group to the free amino group of methionyl-tRNA(fMet). The formyl group appears to play a dual role in the initiator identity of N-formylmethionyl-tRNA by promoting its recognition by IF2 and preventing the misappropriation of this tRNA by the elongation apparatus. The protein is Methionyl-tRNA formyltransferase of Campylobacter jejuni subsp. jejuni serotype O:23/36 (strain 81-176).